The following is a 176-amino-acid chain: Small ribosomal subunit protein uS5 (176 aa).

One can recognise an S5 DRBM domain in the interval 11–74; the sequence is LSEVLVDVNR…QAAKKRMMKV (64 aa).

This sequence belongs to the universal ribosomal protein uS5 family. As to quaternary structure, part of the 30S ribosomal subunit. Contacts proteins S4 and S8.

In terms of biological role, with S4 and S12 plays an important role in translational accuracy. Its function is as follows. Located at the back of the 30S subunit body where it stabilizes the conformation of the head with respect to the body. The sequence is that of Small ribosomal subunit protein uS5 from Rickettsia africae (strain ESF-5).